The following is a 545-amino-acid chain: MVKMRKRLAVACDACRSRRVKCDGQRPSCMGCLSRGLDCSYQRLPEPPATRLETELANVNMRLDYLAMLLSRQSQPQAPPPVLLASARPSSNPLSSHEDSPFRLLATDSIMSVLGLEDHFARRLVQLERASLLASTTTLSRMFFISHQQVTDALIAFSERVHTFYPILPLDFSERYFATLSGPLAPSCQTCLALLVAAIGCIARDPTMGDEYFEAALASLPTVLAECTLASIQCLVFLSIYYCCRLKPCQAHDYCLIASFKIQNLFKSELSVQLDVATSDTWKLDEYIPLPNCRYTWQFSCPPLPGNLAGVSPESASSSSSSISIDSTNSSTSTASDQAQSFFLAEIAMRRMLHRCNSAVAQSSDGRFCYAPSIALELERQLEEWYDYLPASIRFVREPAGGSFNGDQSALSPLSTFLNVQYCCCKLSIYWPAVYQVIQDDKATPQLLEHCQRFIDSYVQLLPRIALAIDKCLIYKWTLSVTFFVTTMAALKVANTAALRAAQHERLHESLALAGTVGWKNTEDSPSLELLRLNLSQHLREAKQK.

Residues 12–39 (CDACRSRRVKCDGQRPSCMGCLSRGLDC) constitute a DNA-binding region (zn(2)-C6 fungal-type). The segment at 79–99 (PPPVLLASARPSSNPLSSHED) is disordered.

It localises to the nucleus. In Aspergillus rugulosus (Emericella rugulosa), this protein is Putative transcription factor ecdB.